The following is a 147-amino-acid chain: Large ribosomal subunit protein uL13 (147 aa).

The segment at 126 to 147 (AGPTHPHQAQQPVPYEIKQVAQ) is disordered.

Belongs to the universal ribosomal protein uL13 family. In terms of assembly, part of the 50S ribosomal subunit.

Its function is as follows. This protein is one of the early assembly proteins of the 50S ribosomal subunit, although it is not seen to bind rRNA by itself. It is important during the early stages of 50S assembly. In Parafrankia sp. (strain EAN1pec), this protein is Large ribosomal subunit protein uL13.